The chain runs to 367 residues: MTASRRTLMVMAGGTGGHVFPGLAVAHRMEAAGWRVVWLGNPAGMEATLVPKHGIPMEYVRFGGLRGKGLKTKLTLPFNLLRACWQSLGALRRVRPDVVLGMGGYITFPAGVMAALSGRPLVLHEQNSIAGLANKVLAKFAKRVLVAFPGALPHAEWTGNPIRAELARTETPQARYASRSGPLNLLVVGGSLGAAALNEVVPRALALLAPGERPRVVHQAGAKHIDALKANYEAAGFAGGDAVRLVPFIDDMASAYAAADLVICRSGAMTVSEIAAVGVAALFVPFPYAVDDHQTTNAAFLADAGAAVLVQQRDLSAELLADWLRSQSRASLADMAERSRSLAKPEATDEVARICATVAGANLEEIK.

UDP-N-acetyl-alpha-D-glucosamine-binding positions include 15–17 (TGG), asparagine 127, arginine 163, serine 191, isoleucine 249, and glutamine 294.

Belongs to the glycosyltransferase 28 family. MurG subfamily.

It is found in the cell inner membrane. It carries out the reaction di-trans,octa-cis-undecaprenyl diphospho-N-acetyl-alpha-D-muramoyl-L-alanyl-D-glutamyl-meso-2,6-diaminopimeloyl-D-alanyl-D-alanine + UDP-N-acetyl-alpha-D-glucosamine = di-trans,octa-cis-undecaprenyl diphospho-[N-acetyl-alpha-D-glucosaminyl-(1-&gt;4)]-N-acetyl-alpha-D-muramoyl-L-alanyl-D-glutamyl-meso-2,6-diaminopimeloyl-D-alanyl-D-alanine + UDP + H(+). Its pathway is cell wall biogenesis; peptidoglycan biosynthesis. Cell wall formation. Catalyzes the transfer of a GlcNAc subunit on undecaprenyl-pyrophosphoryl-MurNAc-pentapeptide (lipid intermediate I) to form undecaprenyl-pyrophosphoryl-MurNAc-(pentapeptide)GlcNAc (lipid intermediate II). In Burkholderia ambifaria (strain MC40-6), this protein is UDP-N-acetylglucosamine--N-acetylmuramyl-(pentapeptide) pyrophosphoryl-undecaprenol N-acetylglucosamine transferase.